We begin with the raw amino-acid sequence, 666 residues long: Long-chain-fatty-acid--CoA ligase ACSBG2 (666 aa).

Residues 230–238 (TSGTTGIPK), 418–423 (ELYGLS), Asp496, and Arg624 each bind ATP.

It belongs to the ATP-dependent AMP-binding enzyme family. Bubblegum subfamily. As to expression, testis-specific.

The protein resides in the cytoplasm. It is found in the membrane. The catalysed reaction is a long-chain fatty acid + ATP + CoA = a long-chain fatty acyl-CoA + AMP + diphosphate. It catalyses the reaction (5Z,8Z,11Z,14Z)-eicosatetraenoate + ATP + CoA = (5Z,8Z,11Z,14Z)-eicosatetraenoyl-CoA + AMP + diphosphate. The enzyme catalyses hexadecanoate + ATP + CoA = hexadecanoyl-CoA + AMP + diphosphate. It carries out the reaction (9Z)-octadecenoate + ATP + CoA = (9Z)-octadecenoyl-CoA + AMP + diphosphate. The catalysed reaction is (9Z,12Z)-octadecadienoate + ATP + CoA = (9Z,12Z)-octadecadienoyl-CoA + AMP + diphosphate. It catalyses the reaction tetracosanoate + ATP + CoA = tetracosanoyl-CoA + AMP + diphosphate. Functionally, catalyzes the conversion of fatty acids such as long chain and very long-chain fatty acids to their active form acyl-CoAs for both synthesis of cellular lipids, and degradation via beta-oxidation. Can activate diverse saturated, monosaturated and polyunsaturated fatty acids. Has increased ability to activate oleic and linoleic acid. May play a role in spermatogenesis. In Homo sapiens (Human), this protein is Long-chain-fatty-acid--CoA ligase ACSBG2.